The primary structure comprises 184 residues: uncharacterized protein (184 aa).

A signal peptide spans 1–23; that stretch reads MFCLLHLCFYLANFASSIKRTHA.

Its subcellular location is the secreted. This is an uncharacterized protein from Homo sapiens (Human).